Consider the following 124-residue polypeptide: Fluoride-specific ion channel FluC (124 aa).

4 helical membrane-spanning segments follow: residues 4–24 (VLLV…ISIF), 35–55 (FGTL…YALG), 60–80 (ISPE…TTFS), and 95–115 (WLKA…MVYL). Residues Gly74 and Thr77 each contribute to the Na(+) site.

The protein belongs to the fluoride channel Fluc/FEX (TC 1.A.43) family.

Its subcellular location is the cell inner membrane. It carries out the reaction fluoride(in) = fluoride(out). Its activity is regulated as follows. Na(+) is not transported, but it plays an essential structural role and its presence is essential for fluoride channel function. Functionally, fluoride-specific ion channel. Important for reducing fluoride concentration in the cell, thus reducing its toxicity. The chain is Fluoride-specific ion channel FluC from Shewanella putrefaciens (strain CN-32 / ATCC BAA-453).